The sequence spans 282 residues: Epoxide hydrolase LasB (282 aa).

The interval 1 to 133 (MPAETVRKEV…TDSSWTARPA (133 aa)) is lsd19A. Tyr-14 contacts substrate. Asp-38 acts as the Proton acceptor; for 5-exo epoxide-opening cyclization activity in catalysis. Substrate is bound by residues Glu-65 and His-146. A lsd19B region spans residues 134 to 282 (PDEERRKELA…TDVSLLDPAA (149 aa)). Residue Asp-170 is the Proton acceptor; for 6-endo epoxide-opening cyclization activity of the active site. The substrate site is built by Arg-177, Glu-197, and Tyr-251.

Its function is as follows. Epoxide hydrolase responsible for the double epoxide-opening cyclization of bisepoxyprelasalocid A to form lasalocid A, a polyether antibiotic. In vitro, accepts various substrate analogs differing in the left segment of lasalocid and epoxide stereochemistry to afford products with excellent regioselectivity. This Streptomyces lasalocidi (Streptomyces lasaliensis) protein is Epoxide hydrolase LasB (lsd19).